Here is a 389-residue protein sequence, read N- to C-terminus: MSKSHLFTSESVSEGHPDKVADQISDAILDAILAQDPRGRVAAETLITTGLIVLAGEITTTAVVDYADVARQTVRRIGYNSSDMGFDWASCAVVQTLDKQSPDIAQGVDEGAGLDLDQGAGDQGLMFGFACDETDVLMPTPIYFAHRLTERQAMVRKDGRLPWLRPDAKSQVTVRYEDDRPVAIDTVVLSTQHAPDISHADLVEAVREEIIKPVLPPEMIHKDTKYLINPTGRFVIGGPVGDCGLTGRKIIVDTYGGQGSHGGGAFSGKDPSKVDRSSSYAGRYVAKNIVAAGLARRCEVQVAYAIGVSQPVSLMVDTFGTGVIDDDRIAALVQEHFDLRPKGIIQMLDLLRPIYAKTAAYGHFGREEPEFTWERTDKAAVLRDAAGLR.

Histidine 16 is a binding site for ATP. Residue aspartate 18 coordinates Mg(2+). Glutamate 44 serves as a coordination point for K(+). Glutamate 57 and glutamine 100 together coordinate L-methionine. The interval 100–110 is flexible loop; that stretch reads QSPDIAQGVDE. ATP is bound by residues 167–169, 233–234, aspartate 242, 248–249, alanine 265, and lysine 269; these read DAK, RF, and RK. L-methionine is bound at residue aspartate 242. Lysine 273 lines the L-methionine pocket.

Belongs to the AdoMet synthase family. Homotetramer; dimer of dimers. Mg(2+) is required as a cofactor. The cofactor is K(+).

Its subcellular location is the cytoplasm. The enzyme catalyses L-methionine + ATP + H2O = S-adenosyl-L-methionine + phosphate + diphosphate. The protein operates within amino-acid biosynthesis; S-adenosyl-L-methionine biosynthesis; S-adenosyl-L-methionine from L-methionine: step 1/1. Its function is as follows. Catalyzes the formation of S-adenosylmethionine (AdoMet) from methionine and ATP. The overall synthetic reaction is composed of two sequential steps, AdoMet formation and the subsequent tripolyphosphate hydrolysis which occurs prior to release of AdoMet from the enzyme. In Acidithiobacillus ferrooxidans (strain ATCC 23270 / DSM 14882 / CIP 104768 / NCIMB 8455) (Ferrobacillus ferrooxidans (strain ATCC 23270)), this protein is S-adenosylmethionine synthase.